Consider the following 863-residue polypeptide: Dipeptidyl peptidase 9 (863 aa).

A disordered region spans residues 1 to 20 (MATTGTPTADRGDAAATDDP). Ala2 bears the N-acetylalanine mark. Catalysis depends on charge relay system residues Ser730, Asp808, and His840. Ser730 contacts Val-boroPro.

It belongs to the peptidase S9B family. DPPIV subfamily. As to quaternary structure, homodimer. Forms a ternary complex with NLRP1, composed of a DPP9 homodimer, one full-length NLRP1 protein, and one cleaved C-terminus of NLRP1 (NACHT, LRR and PYD domains-containing protein 1, C-terminus). Forms a ternary complex with CARD8, composed of a DPP9 homodimer, one full-length NLRP1 protein, and one cleaved C-terminus of CARD8 (Caspase recruitment domain-containing protein 8, C-terminus). In the ternary complex, only one subunit of the DPP9 homodimer is bound to NLRP1 or CARD8. In terms of tissue distribution, ubiquitously expressed, with highest levels in liver, heart and muscle, and lowest levels in brain.

The protein localises to the cytoplasm. It localises to the cytosol. Its subcellular location is the nucleus. The catalysed reaction is Release of an N-terminal dipeptide, Xaa-Yaa-|-Zaa-, from a polypeptide, preferentially when Yaa is Pro, provided Zaa is neither Pro nor hydroxyproline.. With respect to regulation, inhibited by the serine proteinase inhibitor 4-(2-aminoethyl)benzenesulphonyl fluoride (AEBSF), and by di-isopropylfluorophosphate. Inhibited by Val-boroPro (Talabostat, PT-100), a non-selective inhibitor, which triggers pyroptosis in monocytes and macrophages. Val-boroPro inhibits activity by binding to the active site, mimicking a substrate-bound state, thereby displacing the C-terminal fragment of NLRP1, leading to activation of the NLRP1 inflammasome. In contrast, Val-boroPro does not directly displaces CARD8: it acts by promoting degradation of the N-terminal part of CARD8, leading to indirect disruption of the ternary complex. Chemical inhibition of DPP9 by Val-boroPro in HIV-1-infected cells activates the CARD8 inflammasome, triggering cell death, offering a promising strategy for the elimination of HIV-1 reservoirs in people living with HIV-1. Its function is as follows. Dipeptidyl peptidase that cleaves off N-terminal dipeptides from proteins having a Pro or Ala residue at position 2. Acts as a key inhibitor of caspase-1-dependent monocyte and macrophage pyroptosis in resting cells by preventing activation of NLRP1 and CARD8. Sequesters the cleaved C-terminal part of NLRP1 and CARD8, which respectively constitute the active part of the NLRP1 and CARD8 inflammasomes, in a ternary complex, thereby preventing their oligomerization and activation. The dipeptidyl peptidase activity is required to suppress NLRP1 and CARD8; however, neither NLRP1 nor CARD8 are bona fide substrates of DPP9, suggesting the existence of substrate(s) required for NLRP1 and CARD8 inhibition. This Homo sapiens (Human) protein is Dipeptidyl peptidase 9.